Reading from the N-terminus, the 2240-residue chain is Cadherin-89D (2240 aa).

5 consecutive Cadherin domains span residues 70-179, 180-295, 296-411, 412-528, and 529-643; these read SEGV…APEF, LNVP…PPKF, TEGV…VPEF, EADY…TPKF, and EHGN…APYE. 19 N-linked (GlcNAc...) asparagine glycosylation sites follow: Asn114, Asn119, Asn191, Asn278, Asn334, Asn417, Asn585, Asn720, Asn752, Asn822, Asn833, Asn983, Asn989, Asn1006, Asn1255, Asn1318, Asn1486, Asn1529, and Asn1556. The segment at 814–844 is disordered; the sequence is MPSEPTSRNITMGSRFRSRNRSRSSKSKRRL. Cadherin domains are found at residues 824–927, 928–1087, 1171–1284, 1285–1389, and 1411–1520; these read TMGS…APKF, NALT…APMF, TTKC…APTF, KKSW…RPEF, and MLPV…PPKS. The span at 829–844 shows a compositional bias: basic residues; that stretch reads FRSRNRSRSSKSKRRL. Cadherin domains are found at residues 1534–1660 and 1661–1774; these read QHAY…APKF and RGNG…MPVE. A helical transmembrane segment spans residues 1884 to 1904; sequence FVTVVLLALISLGALIAACCY. Residues 1905–2240 are Cytoplasmic-facing; it reads VCMRQKRRLW…LEFSKSNSLF (336 aa). Disordered stretches follow at residues 1930-1972 and 2121-2140; these read IAGI…PESV and AHLELRQPNTDSSDTYEDSL. The span at 1939–1952 shows a compositional bias: basic residues; it reads QKQRRQRQQRHTQR. Residues 1953 to 1964 show a composition bias toward polar residues; it reads CSKGSTGSQRPT.

It is found in the cell membrane. In terms of biological role, cadherins are calcium-dependent cell adhesion proteins. They preferentially interact with themselves in a homophilic manner in connecting cells. This chain is Cadherin-89D (Cad89D), found in Drosophila melanogaster (Fruit fly).